We begin with the raw amino-acid sequence, 387 residues long: Phosphoglycerate kinase (387 aa).

Substrate contacts are provided by residues 21–23 (DLN), arginine 36, 59–62 (HLGR), arginine 113, and arginine 146. ATP is bound by residues lysine 197, glutamate 314, and 340–343 (GGDT).

The protein belongs to the phosphoglycerate kinase family. In terms of assembly, monomer.

Its subcellular location is the cytoplasm. The enzyme catalyses (2R)-3-phosphoglycerate + ATP = (2R)-3-phospho-glyceroyl phosphate + ADP. It functions in the pathway carbohydrate degradation; glycolysis; pyruvate from D-glyceraldehyde 3-phosphate: step 2/5. In Pectobacterium carotovorum subsp. carotovorum (strain PC1), this protein is Phosphoglycerate kinase.